Reading from the N-terminus, the 440-residue chain is Xylose isomerase (440 aa).

Active-site residues include H100 and D103. Positions 231, 267, 270, 295, 306, 308, and 338 each coordinate Mg(2+).

This sequence belongs to the xylose isomerase family. In terms of assembly, homotetramer. Requires Mg(2+) as cofactor.

The protein resides in the cytoplasm. The catalysed reaction is alpha-D-xylose = alpha-D-xylulofuranose. The chain is Xylose isomerase from Burkholderia ambifaria (strain MC40-6).